The chain runs to 415 residues: Serine hydroxymethyltransferase (415 aa).

Residues leucine 117 and 121–123 (GHL) contribute to the (6S)-5,6,7,8-tetrahydrofolate site. The residue at position 226 (lysine 226) is an N6-(pyridoxal phosphate)lysine.

It belongs to the SHMT family. As to quaternary structure, homodimer. Requires pyridoxal 5'-phosphate as cofactor.

Its subcellular location is the cytoplasm. It carries out the reaction (6R)-5,10-methylene-5,6,7,8-tetrahydrofolate + glycine + H2O = (6S)-5,6,7,8-tetrahydrofolate + L-serine. It functions in the pathway one-carbon metabolism; tetrahydrofolate interconversion. The protein operates within amino-acid biosynthesis; glycine biosynthesis; glycine from L-serine: step 1/1. Functionally, catalyzes the reversible interconversion of serine and glycine with tetrahydrofolate (THF) serving as the one-carbon carrier. This reaction serves as the major source of one-carbon groups required for the biosynthesis of purines, thymidylate, methionine, and other important biomolecules. Also exhibits THF-independent aldolase activity toward beta-hydroxyamino acids, producing glycine and aldehydes, via a retro-aldol mechanism. The polypeptide is Serine hydroxymethyltransferase (Leptospira borgpetersenii serovar Hardjo-bovis (strain JB197)).